The chain runs to 166 residues: Putative 4-hydroxy-4-methyl-2-oxoglutarate aldolase (166 aa).

Residues 74-77 (GDQI) and Arg96 contribute to the substrate site. Position 97 (Asp97) interacts with a divalent metal cation.

It belongs to the class II aldolase/RraA-like family. As to quaternary structure, homotrimer. A divalent metal cation is required as a cofactor.

It catalyses the reaction 4-hydroxy-4-methyl-2-oxoglutarate = 2 pyruvate. It carries out the reaction oxaloacetate + H(+) = pyruvate + CO2. In terms of biological role, catalyzes the aldol cleavage of 4-hydroxy-4-methyl-2-oxoglutarate (HMG) into 2 molecules of pyruvate. Also contains a secondary oxaloacetate (OAA) decarboxylase activity due to the common pyruvate enolate transition state formed following C-C bond cleavage in the retro-aldol and decarboxylation reactions. This is Putative 4-hydroxy-4-methyl-2-oxoglutarate aldolase from Xanthomonas axonopodis pv. citri (strain 306).